A 151-amino-acid chain; its full sequence is Trivalent organoarsenical cleaving enzyme (151 aa).

The VOC domain occupies 2-118 (SRVQLALRVP…GGEPWEVYVV (117 aa)). Residue glutamine 5 coordinates Fe(2+). Aspartate 61 lines the roxarsone (III) pocket. Histidine 62 contacts Fe(2+). Roxarsone (III) contacts are provided by cysteine 95 and cysteine 96. Glutamate 114 lines the Fe(2+) pocket.

Monomer. It depends on Fe(2+) as a cofactor.

The enzyme catalyses methylarsonous acid + AH2 + O2 = arsenite + methanol + A + H(+). It carries out the reaction roxarsone (III) + AH2 + O2 = 4-hydroxy-3-nitrocyclohexa-2,5-dien-1-one + arsenite + A + H(+). The catalysed reaction is nitarsone (III) + AH2 + O2 = 4-nitrocyclohexa-2,5-dien-1-one + arsenite + A + H(+). It catalyses the reaction 4-aminophenylarsonous acid + AH2 + O2 = 4-aminocyclohexa-2,5-dien-1-one + arsenite + A. Nonheme iron-dependent dioxygenase that can break carbon-arsenic bonds, playing a role in the detoxification of environmental organoarsenical compounds. Catalyzes the oxygen-dependent demethylation of highly toxic methylarsonous acid (MAs(III)) to arsenite, which can then be exported out of the cell. Can also cleave the C-As bond in several trivalent aromatic arsenicals, including roxarsone (III), nitarsone (III) and (4-aminophenyl)arsonous acid. Organoarsenical degradation by this enzyme is proposed to have a significant impact on the arsenic biogeocycle that maintains a balance between organic and inorganic species. The protein is Trivalent organoarsenical cleaving enzyme of Thermomonospora curvata (strain ATCC 19995 / DSM 43183 / JCM 3096 / KCTC 9072 / NBRC 15933 / NCIMB 10081 / Henssen B9).